The primary structure comprises 546 residues: MAAKDVVFGDSARAKMVEGVNILANAVKVTLGPKGRNVVLERSFGGPTVTKDGVSVAKEIELKDKLQNMGAQMVKEVASKTSDNAGDGTTTATVLAQSIVREGMKYVASGMNPMDLKRGIDKAVTAAIEELRKISKPCTTNKEIAQVGAISANSDSSIGDRIAEAMDKVGKEGVITVEDGKSLQDELDVVEGMQFDRGYLSPYFINNPDKQVAVLDNPFVLLHDKKVSNIRDLLPVLEQVAKAGRPLLIIAEDVEGEALATLVVNNIRGILKTVAVKAPGFGDRRKAMLEDIAILTGGQVIAEETGLTLEKATLAELGQAKRIEVGKENTTIIDGAGEAANIEARVKQVRTQIEEATSDYDREKLQERVAKLAGGVAVIKVGAATEVEMKEKKARVEDALHATRAAVEEGIVAGGGVALIRARTAIAGLKGANADQDAGIKIVLRAMEEPLRQIVTNGGEEASVVVAAVAAGQGNYGYNAATGEYVDLVDAGVVDPTKVTRTALQNAASVAGLLLTTDAAVCELPKEDAPMAGGMPGGMGGMGMDM.

ATP-binding positions include 30 to 33 (TLGP), Lys-51, 87 to 91 (DGTTT), Gly-415, 479 to 481 (NAA), and Asp-495.

It belongs to the chaperonin (HSP60) family. In terms of assembly, forms a cylinder of 14 subunits composed of two heptameric rings stacked back-to-back. Interacts with the co-chaperonin GroES.

The protein resides in the cytoplasm. It carries out the reaction ATP + H2O + a folded polypeptide = ADP + phosphate + an unfolded polypeptide.. In terms of biological role, together with its co-chaperonin GroES, plays an essential role in assisting protein folding. The GroEL-GroES system forms a nano-cage that allows encapsulation of the non-native substrate proteins and provides a physical environment optimized to promote and accelerate protein folding. This is Chaperonin GroEL from Paraburkholderia phytofirmans (strain DSM 17436 / LMG 22146 / PsJN) (Burkholderia phytofirmans).